A 644-amino-acid polypeptide reads, in one-letter code: DNA gyrase subunit B (644 aa).

The region spanning Cys429–Pro543 is the Toprim domain. Residues Glu435, Asp508, and Asp510 each coordinate Mg(2+).

Belongs to the type II topoisomerase GyrB family. Heterotetramer, composed of two GyrA and two GyrB chains. In the heterotetramer, GyrA contains the active site tyrosine that forms a transient covalent intermediate with DNA, while GyrB binds cofactors and catalyzes ATP hydrolysis. Mg(2+) is required as a cofactor. Mn(2+) serves as cofactor. The cofactor is Ca(2+).

It localises to the cytoplasm. It carries out the reaction ATP-dependent breakage, passage and rejoining of double-stranded DNA.. Its function is as follows. A type II topoisomerase that negatively supercoils closed circular double-stranded (ds) DNA in an ATP-dependent manner to modulate DNA topology and maintain chromosomes in an underwound state. Negative supercoiling favors strand separation, and DNA replication, transcription, recombination and repair, all of which involve strand separation. Also able to catalyze the interconversion of other topological isomers of dsDNA rings, including catenanes and knotted rings. Type II topoisomerases break and join 2 DNA strands simultaneously in an ATP-dependent manner. The sequence is that of DNA gyrase subunit B from Staphylococcus aureus (strain Mu50 / ATCC 700699).